Consider the following 544-residue polypeptide: Tyrosine-protein kinase fynb (544 aa).

G2 carries the N-myristoyl glycine lipid modification. Residues C3 and C6 are each lipidated (S-palmitoyl cysteine). In terms of domain architecture, SH3 spans 89–150 (TGVTLFVALY…PSNYVAPVDS (62 aa)). Residues 156 to 253 (WYFGKLGRKD…GLCCRLVVPC (98 aa)) enclose the SH2 domain. Residues 278-531 (LQLIKRLGNG…YLQAFLEDYF (254 aa)) form the Protein kinase domain. Residues 284–292 (LGNGQFGEV) and K306 each bind ATP. D397 serves as the catalytic Proton acceptor. Position 427 is a phosphotyrosine; by autocatalysis (Y427). Phosphotyrosine is present on Y538.

Belongs to the protein kinase superfamily. Tyr protein kinase family. SRC subfamily. The cofactor is Mn(2+).

Its subcellular location is the cytoplasm. The catalysed reaction is L-tyrosyl-[protein] + ATP = O-phospho-L-tyrosyl-[protein] + ADP + H(+). Its activity is regulated as follows. Inhibited by phosphorylation of Tyr-538 by leukocyte common antigen and activated by dephosphorylation of this site. Its function is as follows. Tyrosine-protein kinase implicated in the control of cell growth. Plays a role in the regulation of intracellular calcium levels. Required in brain development and mature brain function with important roles in the regulation of axon growth, axon guidance, and neurite extension. Role in CNTN1-mediated signaling. This Danio rerio (Zebrafish) protein is Tyrosine-protein kinase fynb (fynb).